A 680-amino-acid polypeptide reads, in one-letter code: Lipase 1 (680 aa).

The first 34 residues, 1–34, serve as a signal peptide directing secretion; the sequence is MKSQNKYSIRKFSVGASSILIATLLFLSGGQAQA. The propeptide occupies 35 to 290; sequence AEKQVNMGNS…AKAKDDQTNK (256 aa). Positions 82–259 are disordered; sequence KNLHNDKTIS…PTKDNDKKNG (178 aa). The span at 84–111 shows a compositional bias: basic and acidic residues; it reads LHNDKTISEENHRKTDDLNKDQLKDDKN. Polar residues-rich tracts occupy residues 125–138, 162–193, and 204–223; these read KNNN…NQGL, SQDS…SQRE, and QPQQ…FNNE. Basic and acidic residues predominate over residues 224–234; that stretch reads QEVKPQKDEKT. The segment covering 235-246 has biased composition (polar residues); that stretch reads LSVSDLKNNQKS. The active-site Nucleophile is Ser-408. Asp-600 functions as the Charge relay system in the catalytic mechanism. Asp-638 is a Ca(2+) binding site. His-639 acts as the Charge relay system in catalysis. Ca(2+) contacts are provided by Asp-641, Asp-646, and Asp-649.

It belongs to the AB hydrolase superfamily. Lipase family.

It is found in the secreted. It catalyses the reaction a triacylglycerol + H2O = a diacylglycerol + a fatty acid + H(+). This Staphylococcus aureus (strain Mu50 / ATCC 700699) protein is Lipase 1 (lip1).